The chain runs to 552 residues: Serine protease 53 (552 aa).

The first 23 residues, 1-23 (MRQSWRPELLIVGAVVVIEGLQA), serve as a signal peptide directing secretion. 2 Peptidase S1 domains span residues 24–273 (AQRA…AHVH) and 294–525 (VACG…NLDW). The disordered stretch occupies residues 27–46 (ACGQRGPGPPEPQEGNTLPG). Cys-62 and Cys-78 are joined by a disulfide. Residues His-77 and Asp-128 each act as charge relay system in the active site. Cystine bridges form between Cys-158-Cys-230, Cys-187-Cys-209, Cys-220-Cys-249, and Cys-326-Cys-342. Residues Ser-224, His-341, and Asp-382 each act as charge relay system in the active site. Cystine bridges form between Cys-443/Cys-463 and Cys-473/Cys-501. Ser-477 functions as the Charge relay system in the catalytic mechanism.

This sequence belongs to the peptidase S1 family.

The protein resides in the secreted. In vitro can degrade the fibrinogen alpha chain of as well as pro-urokinase-type plasminogen activator. In Mus musculus (Mouse), this protein is Serine protease 53 (Prss53).